Here is an 891-residue protein sequence, read N- to C-terminus: Receptor-like protein 50 (891 aa).

Positions 1-22 are cleaved as a signal peptide; it reads MITIIWSLCLIFCLSNSILVIA. At 23–849 the chain is on the extracellular side; that stretch reads KDLCLPDQRD…KEEKDKGLSW (827 aa). N-linked (GlcNAc...) asparagine glycosylation is found at N62 and N98. 7 LRR repeats span residues 105–130, 132–152, 153–176, 177–201, 203–225, 226–249, and 250–272; these read QHLQ…NFKY, RVLN…LRSL, SYLT…SMGN, LKHL…LGNL, YLTD…MGNL, KSLR…LGSL, and SNLT…SMSS. Residue N200 is glycosylated (N-linked (GlcNAc...) asparagine). Residues N251, N285, and N306 are each glycosylated (N-linked (GlcNAc...) asparagine). LRR repeat units lie at residues 286–309, 310–334, 336–358, and 359–383; these read LSSL…NMSS, LSKL…LFML, SLIK…NISS, and PSNL…ILKL. N-linked (GlcNAc...) asparagine glycosylation occurs at N355. Residues 384–407 form an LRR 12; degenerate repeat; the sequence is VGLSALSLSFWDTGGIVDFSIFLQ. LRR repeat units follow at residues 408-436, 438-453, 454-477, 478-504, 506-519, 520-544, 545-568, 570-591, 593-614, 615-641, 642-665, 712-736, 737-760, 761-784, and 786-809; these read LKSL…MMHL, LSSC…LENQ, TSLY…LWRL, PTLR…IYSF, ASDN…PRAV, CEIG…EISN, KTLS…SLHG, LRSL…LINC, YLQF…WLKS, LPNL…SLSF, SKLR…YFVG, FEIY…IGIL, KELI…LSNL, SNLQ…LGEL, and FLAR…QIQS. 3 N-linked (GlcNAc...) asparagine glycosylation sites follow: N422, N442, and N452. 5 N-linked (GlcNAc...) asparagine glycosylation sites follow: N531, N544, N554, N590, and N605. Residues N743 and N759 are each glycosylated (N-linked (GlcNAc...) asparagine). N791 and N811 each carry an N-linked (GlcNAc...) asparagine glycan. The chain crosses the membrane as a helical span at residues 850–870; sequence VAAAIGYVPGLFCGLAIGHIL. Over 871–891 the chain is Cytoplasmic; the sequence is TSYKRDWFMRIFSCFSSPLKK.

It belongs to the RLP family.

The protein resides in the cell membrane. The chain is Receptor-like protein 50 from Arabidopsis thaliana (Mouse-ear cress).